Here is an 81-residue protein sequence, read N- to C-terminus: Photosystem I iron-sulfur center (81 aa).

4Fe-4S ferredoxin-type domains are found at residues Ala2 to Trp31 and Ile39 to Tyr68. Residues Cys11, Cys14, Cys17, Cys21, Cys48, Cys51, Cys54, and Cys58 each coordinate [4Fe-4S] cluster.

The eukaryotic PSI reaction center is composed of at least 11 subunits. The cofactor is [4Fe-4S] cluster.

The protein resides in the plastid. The protein localises to the chloroplast thylakoid membrane. The catalysed reaction is reduced [plastocyanin] + hnu + oxidized [2Fe-2S]-[ferredoxin] = oxidized [plastocyanin] + reduced [2Fe-2S]-[ferredoxin]. Apoprotein for the two 4Fe-4S centers FA and FB of photosystem I (PSI); essential for photochemical activity. FB is the terminal electron acceptor of PSI, donating electrons to ferredoxin. The C-terminus interacts with PsaA/B/D and helps assemble the protein into the PSI complex. Required for binding of PsaD and PsaE to PSI. PSI is a plastocyanin-ferredoxin oxidoreductase, converting photonic excitation into a charge separation, which transfers an electron from the donor P700 chlorophyll pair to the spectroscopically characterized acceptors A0, A1, FX, FA and FB in turn. This chain is Photosystem I iron-sulfur center (psaC), found in Anthoceros angustus (Hornwort).